The primary structure comprises 1201 residues: Transcription-repair-coupling factor (1201 aa).

Residues 1 to 27 are disordered; the sequence is MRLLITLGPSGSTHGHSLHTDAGRRRG. Residues 670–831 form the Helicase ATP-binding domain; that stretch reads DMQKPEPMDR…MSGVRDMSII (162 aa). 683–690 provides a ligand contact to ATP; the sequence is GDVGYGKT. The short motif at 784 to 787 is the DEEQ box element; it reads DEEQ. The region spanning 852–1006 is the Helicase C-terminal domain; the sequence is VVKEAIEREV…GFSIASHDLE (155 aa).

The protein in the N-terminal section; belongs to the UvrB family. In the C-terminal section; belongs to the helicase family. RecG subfamily.

It is found in the cytoplasm. In terms of biological role, couples transcription and DNA repair by recognizing RNA polymerase (RNAP) stalled at DNA lesions. Mediates ATP-dependent release of RNAP and its truncated transcript from the DNA, and recruitment of nucleotide excision repair machinery to the damaged site. The protein is Transcription-repair-coupling factor of Myxococcus xanthus.